The primary structure comprises 157 residues: MVRNIMAKEFSRTRRIAQQLQQELAQVLQRDMKDPRIGFVTVNDVDVSRDLSYAKVFVTFFEEDKAVVQEKLNALISAAPYIRTLVAGRMKLRVMPELRFIYDSSLVEGMRMSNLVSQVINQDKAKQQQFGSEEASVEDEVLGDDVADDADETEGKD.

A disordered region spans residues 127–157 (QQQFGSEEASVEDEVLGDDVADDADETEGKD). Residues 135-157 (ASVEDEVLGDDVADDADETEGKD) are compositionally biased toward acidic residues.

Belongs to the RbfA family. As to quaternary structure, monomer. Binds 30S ribosomal subunits, but not 50S ribosomal subunits or 70S ribosomes.

It is found in the cytoplasm. Its function is as follows. One of several proteins that assist in the late maturation steps of the functional core of the 30S ribosomal subunit. Associates with free 30S ribosomal subunits (but not with 30S subunits that are part of 70S ribosomes or polysomes). Required for efficient processing of 16S rRNA. May interact with the 5'-terminal helix region of 16S rRNA. This Shewanella baltica (strain OS195) protein is Ribosome-binding factor A.